Consider the following 305-residue polypeptide: ATP synthase gamma chain (305 aa).

This sequence belongs to the ATPase gamma chain family. In terms of assembly, F-type ATPases have 2 components, CF(1) - the catalytic core - and CF(0) - the membrane proton channel. CF(1) has five subunits: alpha(3), beta(3), gamma(1), delta(1), epsilon(1). CF(0) has three main subunits: a, b and c.

It localises to the cell membrane. In terms of biological role, produces ATP from ADP in the presence of a proton gradient across the membrane. The gamma chain is believed to be important in regulating ATPase activity and the flow of protons through the CF(0) complex. This Streptomyces coelicolor (strain ATCC BAA-471 / A3(2) / M145) protein is ATP synthase gamma chain.